We begin with the raw amino-acid sequence, 311 residues long: Porphobilinogen deaminase (311 aa).

Cys-243 is subject to S-(dipyrrolylmethanemethyl)cysteine.

Belongs to the HMBS family. In terms of assembly, monomer. Requires dipyrromethane as cofactor.

The enzyme catalyses 4 porphobilinogen + H2O = hydroxymethylbilane + 4 NH4(+). It functions in the pathway porphyrin-containing compound metabolism; protoporphyrin-IX biosynthesis; coproporphyrinogen-III from 5-aminolevulinate: step 2/4. In terms of biological role, tetrapolymerization of the monopyrrole PBG into the hydroxymethylbilane pre-uroporphyrinogen in several discrete steps. This Aliivibrio fischeri (strain ATCC 700601 / ES114) (Vibrio fischeri) protein is Porphobilinogen deaminase.